The following is a 276-amino-acid chain: Rhomboid-type serine protease 2 (276 aa).

The next 5 helical transmembrane spans lie at 27–47 (LPLFTRATVLIIVLTWVLTLV), 77–97 (FPFIHLNIFHTILNIVAFTPL), 109–129 (TSVALFFGPFATIPGLIYVFV), 132–152 (FILHANTPVMGASMWVFLLLG), and 175–195 (WITPLLLVVVTAALLPSSSFL). The active-site Nucleophile is the Ser144. His197 is an active-site residue. Residues 198–218 (LAGLLVGYGFGLGYLKFLAPP) traverse the membrane as a helical segment.

This sequence belongs to the peptidase S54 family.

It is found in the golgi apparatus membrane. The protein localises to the golgi apparatus. It localises to the cis-Golgi network membrane. It carries out the reaction Cleaves type-1 transmembrane domains using a catalytic dyad composed of serine and histidine that are contributed by different transmembrane domains.. In terms of biological role, probable rhomboid-type serine protease that catalyzes intramembrane proteolysis. The protein is Rhomboid-type serine protease 2 (rbd-2) of Neurospora crassa (strain ATCC 24698 / 74-OR23-1A / CBS 708.71 / DSM 1257 / FGSC 987).